A 356-amino-acid chain; its full sequence is Alanine racemase (356 aa).

Lys35 (proton acceptor; specific for D-alanine) is an active-site residue. Lys35 bears the N6-(pyridoxal phosphate)lysine mark. Position 130 (Arg130) interacts with substrate. The active-site Proton acceptor; specific for L-alanine is the Tyr253. Met301 serves as a coordination point for substrate.

This sequence belongs to the alanine racemase family. Pyridoxal 5'-phosphate is required as a cofactor.

It catalyses the reaction L-alanine = D-alanine. It participates in amino-acid biosynthesis; D-alanine biosynthesis; D-alanine from L-alanine: step 1/1. In terms of biological role, catalyzes the interconversion of L-alanine and D-alanine. May also act on other amino acids. This is Alanine racemase (alr) from Paraburkholderia phytofirmans (strain DSM 17436 / LMG 22146 / PsJN) (Burkholderia phytofirmans).